Reading from the N-terminus, the 339-residue chain is Phytoene synthase (339 aa).

The protein belongs to the phytoene/squalene synthase family. Requires ATP as cofactor. The cofactor is Mn(2+). Mg(2+) is required as a cofactor.

Its pathway is carotenoid biosynthesis; phytoene biosynthesis. In terms of biological role, involved in the biosynthesis of carotenoids. Catalyzes the condensation of two molecules of geranylgeranyl diphosphate (GGPP) to give prephytoene diphosphate (PPPP) and the subsequent rearrangement of the cyclopropylcarbinyl intermediate to yield phytoene. The sequence is that of Phytoene synthase (crtB) from Rhodobacter capsulatus (strain ATCC BAA-309 / NBRC 16581 / SB1003).